The following is a 154-amino-acid chain: UPF0756 membrane protein CKR_1028 (154 aa).

4 consecutive transmembrane segments (helical) span residues 5–25 (IILIIILTASVLGRANSVALA), 48–68 (NGLFLGLVILIASILIPIADG), 82–102 (WLGIFALLVSLFTTYLSGLGM), and 113–133 (IMPALILGAVIAAAFLGGVPV).

The protein belongs to the UPF0756 family.

It is found in the cell membrane. This is UPF0756 membrane protein CKR_1028 from Clostridium kluyveri (strain NBRC 12016).